A 184-amino-acid polypeptide reads, in one-letter code: ATP synthase subunit delta (184 aa).

The protein belongs to the ATPase delta chain family. As to quaternary structure, F-type ATPases have 2 components, F(1) - the catalytic core - and F(0) - the membrane proton channel. F(1) has five subunits: alpha(3), beta(3), gamma(1), delta(1), epsilon(1). F(0) has three main subunits: a(1), b(2) and c(10-14). The alpha and beta chains form an alternating ring which encloses part of the gamma chain. F(1) is attached to F(0) by a central stalk formed by the gamma and epsilon chains, while a peripheral stalk is formed by the delta and b chains.

Its subcellular location is the cell inner membrane. In terms of biological role, f(1)F(0) ATP synthase produces ATP from ADP in the presence of a proton or sodium gradient. F-type ATPases consist of two structural domains, F(1) containing the extramembraneous catalytic core and F(0) containing the membrane proton channel, linked together by a central stalk and a peripheral stalk. During catalysis, ATP synthesis in the catalytic domain of F(1) is coupled via a rotary mechanism of the central stalk subunits to proton translocation. Its function is as follows. This protein is part of the stalk that links CF(0) to CF(1). It either transmits conformational changes from CF(0) to CF(1) or is implicated in proton conduction. The sequence is that of ATP synthase subunit delta from Paramagnetospirillum magneticum (strain ATCC 700264 / AMB-1) (Magnetospirillum magneticum).